The primary structure comprises 190 residues: Crossover junction endodeoxyribonuclease RuvC (190 aa).

Active-site residues include Asp-8, Glu-67, and Asp-139. Mg(2+) contacts are provided by Asp-8, Glu-67, and Asp-139.

This sequence belongs to the RuvC family. As to quaternary structure, homodimer which binds Holliday junction (HJ) DNA. The HJ becomes 2-fold symmetrical on binding to RuvC with unstacked arms; it has a different conformation from HJ DNA in complex with RuvA. In the full resolvosome a probable DNA-RuvA(4)-RuvB(12)-RuvC(2) complex forms which resolves the HJ. Mg(2+) serves as cofactor.

It is found in the cytoplasm. The catalysed reaction is Endonucleolytic cleavage at a junction such as a reciprocal single-stranded crossover between two homologous DNA duplexes (Holliday junction).. In terms of biological role, the RuvA-RuvB-RuvC complex processes Holliday junction (HJ) DNA during genetic recombination and DNA repair. Endonuclease that resolves HJ intermediates. Cleaves cruciform DNA by making single-stranded nicks across the HJ at symmetrical positions within the homologous arms, yielding a 5'-phosphate and a 3'-hydroxyl group; requires a central core of homology in the junction. The consensus cleavage sequence is 5'-(A/T)TT(C/G)-3'. Cleavage occurs on the 3'-side of the TT dinucleotide at the point of strand exchange. HJ branch migration catalyzed by RuvA-RuvB allows RuvC to scan DNA until it finds its consensus sequence, where it cleaves and resolves the cruciform DNA. This Haemophilus influenzae (strain PittEE) protein is Crossover junction endodeoxyribonuclease RuvC.